The primary structure comprises 480 residues: Alpha-glucosidase (480 aa).

An NAD(+)-binding site is contributed by 4-70 (VKIGIIGAGS…ADLKFEKTMN (67 aa)). The substrate site is built by D119 and N153. A Mn(2+)-binding site is contributed by C174. H175 (proton donor) is an active-site residue. A Mn(2+)-binding site is contributed by H203. The active-site Proton acceptor is D260.

This sequence belongs to the glycosyl hydrolase 4 family. In terms of assembly, homodimer. NAD(+) serves as cofactor. Requires Mn(2+) as cofactor. The cofactor is Co(2+). Ni(2+) is required as a cofactor.

The catalysed reaction is Hydrolysis of terminal, non-reducing (1-&gt;4)-linked alpha-D-glucose residues with release of alpha-D-glucose.. Its activity is regulated as follows. Inhibited by Hg(2+) ion and EDTA. In terms of biological role, alpha-glycosidase with a very broad specificity. Hydrolyzes maltose and other small maltooligosaccharides but is inactive against the polymeric substrate starch. AglA is not specific with respect to the configuration at the C-4 position of its substrates because glycosidic derivatives of D-galactose are also hydrolyzed. Does not cleave beta-glycosidic bonds. This is Alpha-glucosidase (aglA) from Thermotoga maritima (strain ATCC 43589 / DSM 3109 / JCM 10099 / NBRC 100826 / MSB8).